The primary structure comprises 123 residues: uncharacterized protein (123 aa).

Residues 14–34 (VVLKITAVVCSVFSIRVLILA) traverse the membrane as a helical segment.

The protein resides in the membrane. This is an uncharacterized protein from Saccharomyces cerevisiae (strain ATCC 204508 / S288c) (Baker's yeast).